Reading from the N-terminus, the 159-residue chain is Phosphopantetheine adenylyltransferase (159 aa).

T8 contributes to the substrate binding site. Residues 8-9 (TF) and H16 each bind ATP. 3 residues coordinate substrate: K40, T72, and R86. Residues 87-89 (GLR), E97, and 122-128 (YSFLSSS) contribute to the ATP site.

The protein belongs to the bacterial CoaD family. Homohexamer. Mg(2+) serves as cofactor.

The protein localises to the cytoplasm. The enzyme catalyses (R)-4'-phosphopantetheine + ATP + H(+) = 3'-dephospho-CoA + diphosphate. The protein operates within cofactor biosynthesis; coenzyme A biosynthesis; CoA from (R)-pantothenate: step 4/5. Functionally, reversibly transfers an adenylyl group from ATP to 4'-phosphopantetheine, yielding dephospho-CoA (dPCoA) and pyrophosphate. This is Phosphopantetheine adenylyltransferase from Prochlorococcus marinus subsp. pastoris (strain CCMP1986 / NIES-2087 / MED4).